A 61-amino-acid chain; its full sequence is Tryptophyllin-T1 (61 aa).

Residues 1–22 (MDFLKKSLFLVLFLGLVSISLC) form the signal peptide. A propeptide spanning residues 23–53 (DEEKRQDDDEASEREEKKEIHEEGNQEERRD) is cleaved from the precursor. The tract at residues 25-61 (EKRQDDDEASEREEKKEIHEEGNQEERRDRPPSWIPK) is disordered. Residues 36 to 55 (REEKKEIHEEGNQEERRDRP) are compositionally biased toward basic and acidic residues. Proline 56 is subject to 4-hydroxyproline; partial.

This sequence belongs to the frog skin active peptide (FSAP) family. Tryptophillin subfamily. Expressed by the skin glands.

Its subcellular location is the secreted. This chain is Tryptophyllin-T1, found in Pithecopus azureus (Orange-legged monkey tree frog).